A 269-amino-acid chain; its full sequence is Glutamate racemase (269 aa).

Substrate contacts are provided by residues 13–14 (DS) and 45–46 (YS). C77 functions as the Proton donor/acceptor in the catalytic mechanism. 78-79 (NT) contacts substrate. Residue C188 is the Proton donor/acceptor of the active site. Residue 189 to 190 (TH) participates in substrate binding.

This sequence belongs to the aspartate/glutamate racemases family.

The enzyme catalyses L-glutamate = D-glutamate. The protein operates within cell wall biogenesis; peptidoglycan biosynthesis. Functionally, provides the (R)-glutamate required for cell wall biosynthesis. The protein is Glutamate racemase of Pasteurella multocida (strain Pm70).